The sequence spans 340 residues: Phosphoribosylformylglycinamidine cyclo-ligase (340 aa).

This sequence belongs to the AIR synthase family.

It is found in the cytoplasm. The enzyme catalyses 2-formamido-N(1)-(5-O-phospho-beta-D-ribosyl)acetamidine + ATP = 5-amino-1-(5-phospho-beta-D-ribosyl)imidazole + ADP + phosphate + H(+). It functions in the pathway purine metabolism; IMP biosynthesis via de novo pathway; 5-amino-1-(5-phospho-D-ribosyl)imidazole from N(2)-formyl-N(1)-(5-phospho-D-ribosyl)glycinamide: step 2/2. This chain is Phosphoribosylformylglycinamidine cyclo-ligase, found in Streptococcus agalactiae serotype V (strain ATCC BAA-611 / 2603 V/R).